A 776-amino-acid chain; its full sequence is Heat shock protein 110 (776 aa).

Residues 741–776 (ILNKKKPAAPAPPKKEEPQPAAGDQPQSQPGEMDVD) form a disordered region.

This sequence belongs to the heat shock protein 70 family.

The polypeptide is Heat shock protein 110 (Caenorhabditis elegans).